The sequence spans 253 residues: Adenosylcobinamide-GDP ribazoletransferase (253 aa).

4 consecutive transmembrane segments (helical) span residues 33–53, 106–126, 132–152, and 178–198; these read ISPI…YLIL, VGSG…VALL, LYTI…SLYI, and ILLL…FIIF.

The protein belongs to the CobS family. Requires Mg(2+) as cofactor.

It localises to the cell membrane. The enzyme catalyses alpha-ribazole + adenosylcob(III)inamide-GDP = adenosylcob(III)alamin + GMP + H(+). It carries out the reaction alpha-ribazole 5'-phosphate + adenosylcob(III)inamide-GDP = adenosylcob(III)alamin 5'-phosphate + GMP + H(+). It functions in the pathway cofactor biosynthesis; adenosylcobalamin biosynthesis; adenosylcobalamin from cob(II)yrinate a,c-diamide: step 7/7. Its function is as follows. Joins adenosylcobinamide-GDP and alpha-ribazole to generate adenosylcobalamin (Ado-cobalamin). Also synthesizes adenosylcobalamin 5'-phosphate from adenosylcobinamide-GDP and alpha-ribazole 5'-phosphate. The protein is Adenosylcobinamide-GDP ribazoletransferase of Saccharolobus solfataricus (strain ATCC 35092 / DSM 1617 / JCM 11322 / P2) (Sulfolobus solfataricus).